Here is a 162-residue protein sequence, read N- to C-terminus: uncharacterized protein (162 aa).

This is an uncharacterized protein from Aedes vexans (Inland floodwater mosquito).